A 1213-amino-acid chain; its full sequence is A disintegrin and metalloproteinase with thrombospondin motifs 2 (1213 aa).

The first 28 residues, 1–28, serve as a signal peptide directing secretion; it reads MDPPAGAARRLLCPALLLLLLPPPPLLL. Residues 29–260 constitute a propeptide that is removed on maturation; that stretch reads LPPPPASVRL…INSSRRRVRR (232 aa). N-linked (GlcNAc...) asparagine glycosylation occurs at asparagine 111. The tract at residues 211–232 is disordered; the sequence is YRRPPTPKPPPVSEPQALDTGV. Over residues 214-223 the composition is skewed to pro residues; the sequence is PPTPKPPPVS. Asparagine 252 carries an N-linked (GlcNAc...) asparagine glycan. The region spanning 267–471 is the Peptidase M12B domain; that stretch reads YNIEVLLGVD…HSYDCLRDDP (205 aa). Cystine bridges form between cysteine 344–cysteine 393, cysteine 387–cysteine 466, cysteine 426–cysteine 452, cysteine 493–cysteine 518, cysteine 504–cysteine 527, cysteine 513–cysteine 546, cysteine 540–cysteine 551, cysteine 574–cysteine 611, cysteine 578–cysteine 616, and cysteine 589–cysteine 601. Residue histidine 409 coordinates Zn(2+). The active site involves glutamate 410. Positions 413 and 419 each coordinate Zn(2+). Residues 480–560 form the Disintegrin domain; that stretch reads PQLPGLHYSM…CIWLTPDILK (81 aa). The TSP type-1 1 domain occupies 561–617; it reads RDGNWGAWTPFGSCSRTCGTGVKFRTRQCDNPHPANGGRTCSGLAYDFQLCNPQDCP. Residues 692-694 carry the Cell attachment site motif; it reads RGD. The segment at 723-851 is spacer; sequence CKVVKGTFTR…LNVDDNNVLE (129 aa). TSP type-1 domains lie at 855-913, 915-975, and 976-1030; these read VRHE…NPQE, SQPV…NREL, and CPGR…APCP. Asparagine 949, asparagine 950, and asparagine 994 each carry an N-linked (GlcNAc...) asparagine glycan. Disulfide bonds link cysteine 988–cysteine 1024, cysteine 992–cysteine 1029, and cysteine 1003–cysteine 1013. Asparagine 1032 carries N-linked (GlcNAc...) asparagine glycosylation. Positions 1060–1098 constitute a PLAC domain; it reads SKDQCQGDKSMFCRMEVLSRYCSIPSYNKLCCKSCNPPR. Residues asparagine 1099, asparagine 1147, and asparagine 1152 are each glycosylated (N-linked (GlcNAc...) asparagine).

In terms of assembly, may belong to a multimeric complex. Binds specifically to collagen type XIV. Requires Zn(2+) as cofactor. The precursor is cleaved by a furin endopeptidase. Post-translationally, glycosylated. Can be O-fucosylated by POFUT2 on a serine or a threonine residue found within the consensus sequence C1-X(2)-(S/T)-C2-G of the TSP type-1 repeat domains where C1 and C2 are the first and second cysteine residue of the repeat, respectively. Fucosylated repeats can then be further glycosylated by the addition of a beta-1,3-glucose residue by the glucosyltransferase, B3GALTL. Fucosylation mediates the efficient secretion of ADAMTS family members. Can also be C-glycosylated with one or two mannose molecules on tryptophan residues within the consensus sequence W-X-X-W of the TPRs, and N-glycosylated. These other glycosylations can also facilitate secretion.

The protein resides in the secreted. It localises to the extracellular space. Its subcellular location is the extracellular matrix. The catalysed reaction is Cleaves the N-propeptide of collagen chain alpha1(I) at Pro-|-Gln and of alpha1(II) and alpha2(I) at Ala-|-Gln.. Cleaves the propeptides of type I and II collagen prior to fibril assembly. Does not act on type III collagen. Cleaves lysyl oxidase LOX at a site downstream of its propeptide cleavage site to produce a short LOX form with reduced collagen-binding activity. The sequence is that of A disintegrin and metalloproteinase with thrombospondin motifs 2 (Adamts2) from Mus musculus (Mouse).